A 146-amino-acid polypeptide reads, in one-letter code: Large ribosomal subunit protein uL15 (146 aa).

Residues 1 to 10 are compositionally biased toward basic and acidic residues; the sequence is MTLKLHDLRP. The interval 1-41 is disordered; the sequence is MTLKLHDLRPARGSKTARTRVGRGDGSKGKTAGRGTKGTRA.

The protein belongs to the universal ribosomal protein uL15 family. As to quaternary structure, part of the 50S ribosomal subunit.

Binds to the 23S rRNA. In Mycobacterium bovis (strain BCG / Pasteur 1173P2), this protein is Large ribosomal subunit protein uL15.